The primary structure comprises 370 residues: Peridinin-chlorophyll a-binding protein 1, chloroplastic (370 aa).

A chloroplast-targeting transit peptide spans 1-57; that stretch reads MVRSGKKAVVLAAVAFCATSVVQKSHGFVPSPLRQRAAAAGAAAASAATMFAPAAFA. 2 repeat units span residues 58–220 and 221–370.

As to quaternary structure, homotrimer.

The protein localises to the plastid. Its subcellular location is the chloroplast. Water-soluble antenna for capture of solar energy in the blue-green range. Peridinin is an asymmetric carotenoid. This Amphidinium carterae (Dinoflagellate) protein is Peridinin-chlorophyll a-binding protein 1, chloroplastic.